A 66-amino-acid polypeptide reads, in one-letter code: Ejaculatory bulb-specific protein 2 (66 aa).

The signal sequence occupies residues 1–20 (MIRILVLMITFTLMTGSALC).

Specifically expressed in the ejaculatory bulb and seminal fluid.

It is found in the secreted. Its function is as follows. Protein component of the posterior mating plug. The sequence is that of Ejaculatory bulb-specific protein 2 from Drosophila melanogaster (Fruit fly).